Reading from the N-terminus, the 317-residue chain is tRNA dimethylallyltransferase (317 aa).

14 to 21 (GPTASGKS) contacts ATP. 16-21 (TASGKS) is a substrate binding site. Interaction with substrate tRNA regions lie at residues 39–42 (DSVL) and 163–167 (QRIQR).

This sequence belongs to the IPP transferase family. In terms of assembly, monomer. Mg(2+) is required as a cofactor.

The catalysed reaction is adenosine(37) in tRNA + dimethylallyl diphosphate = N(6)-dimethylallyladenosine(37) in tRNA + diphosphate. Functionally, catalyzes the transfer of a dimethylallyl group onto the adenine at position 37 in tRNAs that read codons beginning with uridine, leading to the formation of N6-(dimethylallyl)adenosine (i(6)A). The polypeptide is tRNA dimethylallyltransferase (Xylella fastidiosa (strain M23)).